Consider the following 280-residue polypeptide: Ribosomal RNA small subunit methyltransferase I (280 aa).

Belongs to the methyltransferase superfamily. RsmI family.

It is found in the cytoplasm. It carries out the reaction cytidine(1402) in 16S rRNA + S-adenosyl-L-methionine = 2'-O-methylcytidine(1402) in 16S rRNA + S-adenosyl-L-homocysteine + H(+). Functionally, catalyzes the 2'-O-methylation of the ribose of cytidine 1402 (C1402) in 16S rRNA. This is Ribosomal RNA small subunit methyltransferase I from Rickettsia prowazekii (strain Madrid E).